The primary structure comprises 177 residues: Crossover junction endodeoxyribonuclease RuvC (177 aa).

Catalysis depends on residues aspartate 8, glutamate 72, and aspartate 144. Residues aspartate 8, glutamate 72, and aspartate 144 each contribute to the Mg(2+) site.

This sequence belongs to the RuvC family. In terms of assembly, homodimer which binds Holliday junction (HJ) DNA. The HJ becomes 2-fold symmetrical on binding to RuvC with unstacked arms; it has a different conformation from HJ DNA in complex with RuvA. In the full resolvosome a probable DNA-RuvA(4)-RuvB(12)-RuvC(2) complex forms which resolves the HJ. Mg(2+) serves as cofactor.

The protein localises to the cytoplasm. It carries out the reaction Endonucleolytic cleavage at a junction such as a reciprocal single-stranded crossover between two homologous DNA duplexes (Holliday junction).. Functionally, the RuvA-RuvB-RuvC complex processes Holliday junction (HJ) DNA during genetic recombination and DNA repair. Endonuclease that resolves HJ intermediates. Cleaves cruciform DNA by making single-stranded nicks across the HJ at symmetrical positions within the homologous arms, yielding a 5'-phosphate and a 3'-hydroxyl group; requires a central core of homology in the junction. The consensus cleavage sequence is 5'-(A/T)TT(C/G)-3'. Cleavage occurs on the 3'-side of the TT dinucleotide at the point of strand exchange. HJ branch migration catalyzed by RuvA-RuvB allows RuvC to scan DNA until it finds its consensus sequence, where it cleaves and resolves the cruciform DNA. This Teredinibacter turnerae (strain ATCC 39867 / T7901) protein is Crossover junction endodeoxyribonuclease RuvC.